The sequence spans 316 residues: Pseudouridine-5'-phosphate glycosidase (316 aa).

Catalysis depends on Glu-31, which acts as the Proton donor. Substrate-binding residues include Lys-92 and Val-112. Residue Asp-144 participates in Mn(2+) binding. 146–148 serves as a coordination point for substrate; sequence SAD. Lys-165 functions as the Nucleophile in the catalytic mechanism.

The protein belongs to the pseudouridine-5'-phosphate glycosidase family. In terms of assembly, homotrimer. Requires Mn(2+) as cofactor.

The catalysed reaction is D-ribose 5-phosphate + uracil = psi-UMP + H2O. Catalyzes the reversible cleavage of pseudouridine 5'-phosphate (PsiMP) to ribose 5-phosphate and uracil. Functions biologically in the cleavage direction, as part of a pseudouridine degradation pathway. Part of an operon that could be involved in the biosynthesis of the blue pigment indigoidine, which is implicated in pathogenicity and protection from oxidative stress. The protein is Pseudouridine-5'-phosphate glycosidase of Dickeya dadantii (strain 3937) (Erwinia chrysanthemi (strain 3937)).